The following is a 105-amino-acid chain: Vitelline membrane protein Vm32E (105 aa).

The first 17 residues, 1 to 17 (MHFIALIVAVCVAFAGA), serve as a signal peptide directing secretion. In terms of domain architecture, VM spans 25–62 (GIAAPPCPKNYLFSCQPNLVPAPCAQEAASYGSAGAYA).

Belongs to the vitelline membrane family.

The protein resides in the secreted. In terms of biological role, major early eggshell protein. The polypeptide is Vitelline membrane protein Vm32E (Drosophila ananassae (Fruit fly)).